The sequence spans 147 residues: uncharacterized protein (147 aa).

Transmembrane regions (helical) follow at residues 42–62 (WASL…SPEP) and 64–84 (LILQ…ATAF).

It is found in the cell membrane. This is an uncharacterized protein from Bacillus subtilis (strain 168).